The following is a 741-amino-acid chain: NAD(P)H-quinone oxidoreductase subunit 5, chloroplastic (741 aa).

Transmembrane regions (helical) follow at residues 9–29 (WIIP…LLLF), 40–60 (WAVP…ELAI), 89–109 (IDPL…LVLI), 125–145 (FSYL…SNLI), 147–167 (IYIF…FWFA), 185–205 (GDFG…SFEF), 219–239 (NGVN…GAVA), 258–278 (TPIS…FLVA), 280–300 (LLPL…IGVI), 327–347 (LGYI…FHLI), 396–416 (TTFF…CFWS), 425–445 (WLYS…TAFY), 547–567 (LLPL…GIPF), 606–626 (ILSV…YGSV), and 721–741 (SYIF…YFFI).

It belongs to the complex I subunit 5 family. As to quaternary structure, NDH is composed of at least 16 different subunits, 5 of which are encoded in the nucleus.

Its subcellular location is the plastid. The protein localises to the chloroplast thylakoid membrane. The catalysed reaction is a plastoquinone + NADH + (n+1) H(+)(in) = a plastoquinol + NAD(+) + n H(+)(out). The enzyme catalyses a plastoquinone + NADPH + (n+1) H(+)(in) = a plastoquinol + NADP(+) + n H(+)(out). NDH shuttles electrons from NAD(P)H:plastoquinone, via FMN and iron-sulfur (Fe-S) centers, to quinones in the photosynthetic chain and possibly in a chloroplast respiratory chain. The immediate electron acceptor for the enzyme in this species is believed to be plastoquinone. Couples the redox reaction to proton translocation, and thus conserves the redox energy in a proton gradient. The chain is NAD(P)H-quinone oxidoreductase subunit 5, chloroplastic (ndhF) from Ceratophyllum demersum (Rigid hornwort).